A 313-amino-acid polypeptide reads, in one-letter code: Olfactory receptor 4M2 (313 aa).

Residues 1–25 (METANYTKVTEFVLTGLSQTPEVQL) lie on the Extracellular side of the membrane. Asparagine 5 is a glycosylation site (N-linked (GlcNAc...) asparagine). A helical membrane pass occupies residues 26-49 (VLFVIFLSFYLFILPGNILIICTI). The Cytoplasmic portion of the chain corresponds to 50–57 (SLDPHLTS). A helical membrane pass occupies residues 58-79 (PMYFLLANLAFLDIWYSSITAP). Topologically, residues 80 to 100 (EMLIDFFVERKIISFDGCIAQ) are extracellular. Cysteine 97 and cysteine 189 are joined by a disulfide. A helical membrane pass occupies residues 101 to 120 (LFFLHFAGASEMFLLTVMAF). Over 121 to 139 (DLYTAICRPLHYATIMNQR) the chain is Cytoplasmic. Residues 140-158 (LCCILVALSWRGGFIHSII) traverse the membrane as a helical segment. Topologically, residues 159–195 (QVALIVRLPFCGPNELDSYFCDITQVVRIACANTFPE) are extracellular. The chain crosses the membrane as a helical span at residues 196–219 (ELVMICSSGLISVVCLIALLMSYA). At 220 to 237 (FLLALFKKLSGSGENTNR) the chain is on the cytoplasmic side. A helical transmembrane segment spans residues 238-260 (AMSTCYSHITIVVLMFGPSIYIY). The Extracellular segment spans residues 261 to 271 (ARPFDSFSLDK). A helical transmembrane segment spans residues 272–291 (VVSVFNTLIFPLRNPIIYTL). Residues 292 to 313 (RNKEVKAAMRKLVTKYILCKEK) lie on the Cytoplasmic side of the membrane.

Belongs to the G-protein coupled receptor 1 family.

It is found in the cell membrane. Its function is as follows. Odorant receptor. The chain is Olfactory receptor 4M2 (OR4M2) from Homo sapiens (Human).